The following is a 399-amino-acid chain: MTKKRHLFTSESVTEGHPDKICDQISDSILDAILAKDANARVACETTVTTGLVLVAGEITTSTYVDIPKIVRETIQGIGYTRAKYGFDAETCAVLTSIDEQSADIAMGVDQALEAREGQMTDAEIEAIGAGDQGLMFGFACNETQELMPLPISLAHKLARRLTEVRKDDTLSYLRPDGKTQVTVEYDENGKPVRVDTIVISTQHHPDVTWEEIDRDLKEHVIKAVVPAELMDGETKFFINPTGRFVIGGPQGDAGLTGRKIIVDTYGGYARHGGGAFSGKDATKVDRSAAYAARYVAKNIVAAGLADKAEVQLAYAIGVAQPVSISVDTLGTGKVSEDVLVELVRNNFDLRPAGIIKMLDLRRPIYKQTAAYGHFGRTDVDLTWERTDKAATLKEQAGL.

Residue H17 participates in ATP binding. D19 is a binding site for Mg(2+). E45 contributes to the K(+) binding site. 2 residues coordinate L-methionine: E58 and Q101. The flexible loop stretch occupies residues 101 to 111; the sequence is QSADIAMGVDQ. ATP is bound by residues 177–179, 244–245, D253, 259–260, A276, and K280; these read DGK, RF, and RK. D253 is an L-methionine binding site. K284 serves as a coordination point for L-methionine.

This sequence belongs to the AdoMet synthase family. In terms of assembly, homotetramer; dimer of dimers. Mg(2+) serves as cofactor. It depends on K(+) as a cofactor.

It is found in the cytoplasm. The enzyme catalyses L-methionine + ATP + H2O = S-adenosyl-L-methionine + phosphate + diphosphate. It functions in the pathway amino-acid biosynthesis; S-adenosyl-L-methionine biosynthesis; S-adenosyl-L-methionine from L-methionine: step 1/1. In terms of biological role, catalyzes the formation of S-adenosylmethionine (AdoMet) from methionine and ATP. The overall synthetic reaction is composed of two sequential steps, AdoMet formation and the subsequent tripolyphosphate hydrolysis which occurs prior to release of AdoMet from the enzyme. In Bacillus mycoides (strain KBAB4) (Bacillus weihenstephanensis), this protein is S-adenosylmethionine synthase.